A 345-amino-acid polypeptide reads, in one-letter code: Biotin synthase (345 aa).

The Radical SAM core domain occupies 67-295 (YKVQLASLLS…KSRIRLSAGR (229 aa)). [4Fe-4S] cluster-binding residues include cysteine 82, cysteine 86, and cysteine 89. The [2Fe-2S] cluster site is built by cysteine 126, cysteine 158, cysteine 218, and arginine 290.

This sequence belongs to the radical SAM superfamily. Biotin synthase family. As to quaternary structure, homodimer. The cofactor is [4Fe-4S] cluster. [2Fe-2S] cluster serves as cofactor.

It carries out the reaction (4R,5S)-dethiobiotin + (sulfur carrier)-SH + 2 reduced [2Fe-2S]-[ferredoxin] + 2 S-adenosyl-L-methionine = (sulfur carrier)-H + biotin + 2 5'-deoxyadenosine + 2 L-methionine + 2 oxidized [2Fe-2S]-[ferredoxin]. Its pathway is cofactor biosynthesis; biotin biosynthesis; biotin from 7,8-diaminononanoate: step 2/2. In terms of biological role, catalyzes the conversion of dethiobiotin (DTB) to biotin by the insertion of a sulfur atom into dethiobiotin via a radical-based mechanism. The sequence is that of Biotin synthase from Prochlorococcus marinus (strain NATL2A).